A 286-amino-acid chain; its full sequence is uncharacterized protein (286 aa).

Belongs to the methyltransferase superfamily.

In terms of biological role, involved in osmoadaptation. This is an uncharacterized protein from Emericella nidulans (strain FGSC A4 / ATCC 38163 / CBS 112.46 / NRRL 194 / M139) (Aspergillus nidulans).